The primary structure comprises 243 residues: DNA repair protein RecO (243 aa).

Belongs to the RecO family.

Functionally, involved in DNA repair and RecF pathway recombination. The polypeptide is DNA repair protein RecO (Xylella fastidiosa (strain M12)).